Consider the following 78-residue polypeptide: Acyl carrier protein (78 aa).

A Carrier domain is found at 2–77; it reads STIEERVKKI…EAIDYVTAHA (76 aa). S37 bears the O-(pantetheine 4'-phosphoryl)serine mark.

This sequence belongs to the acyl carrier protein (ACP) family. In terms of processing, 4'-phosphopantetheine is transferred from CoA to a specific serine of apo-ACP by AcpS. This modification is essential for activity because fatty acids are bound in thioester linkage to the sulfhydryl of the prosthetic group.

It is found in the cytoplasm. Its pathway is lipid metabolism; fatty acid biosynthesis. Its function is as follows. Carrier of the growing fatty acid chain in fatty acid biosynthesis. This chain is Acyl carrier protein, found in Ectopseudomonas mendocina (strain ymp) (Pseudomonas mendocina).